The chain runs to 339 residues: Mycothiol acetyltransferase (339 aa).

N-acetyltransferase domains lie at 8 to 174 (YEQL…QGLT) and 176 to 339 (LTYP…GELN). Glutamate 39 serves as a coordination point for 1D-myo-inositol 2-(L-cysteinylamino)-2-deoxy-alpha-D-glucopyranoside. 85 to 87 (LAV) lines the acetyl-CoA pocket. Glutamate 207, lysine 254, and glutamate 270 together coordinate 1D-myo-inositol 2-(L-cysteinylamino)-2-deoxy-alpha-D-glucopyranoside. Residue 274 to 276 (VCL) participates in acetyl-CoA binding. Position 308 (tyrosine 308) interacts with 1D-myo-inositol 2-(L-cysteinylamino)-2-deoxy-alpha-D-glucopyranoside.

It belongs to the acetyltransferase family. MshD subfamily. As to quaternary structure, monomer.

It catalyses the reaction 1D-myo-inositol 2-(L-cysteinylamino)-2-deoxy-alpha-D-glucopyranoside + acetyl-CoA = mycothiol + CoA + H(+). Functionally, catalyzes the transfer of acetyl from acetyl-CoA to desacetylmycothiol (Cys-GlcN-Ins) to form mycothiol. The protein is Mycothiol acetyltransferase of Corynebacterium urealyticum (strain ATCC 43042 / DSM 7109).